The chain runs to 377 residues: Lipoyl synthase, mitochondrial (377 aa).

[4Fe-4S] cluster-binding residues include C103, C108, C114, C134, C138, C141, and S349. The region spanning 119-338 (EHGTQTATIM…EERGNELGFL (220 aa)) is the Radical SAM core domain.

The protein belongs to the radical SAM superfamily. Lipoyl synthase family. [4Fe-4S] cluster serves as cofactor.

The protein resides in the mitochondrion. It catalyses the reaction [[Fe-S] cluster scaffold protein carrying a second [4Fe-4S](2+) cluster] + N(6)-octanoyl-L-lysyl-[protein] + 2 oxidized [2Fe-2S]-[ferredoxin] + 2 S-adenosyl-L-methionine + 4 H(+) = [[Fe-S] cluster scaffold protein] + N(6)-[(R)-dihydrolipoyl]-L-lysyl-[protein] + 4 Fe(3+) + 2 hydrogen sulfide + 2 5'-deoxyadenosine + 2 L-methionine + 2 reduced [2Fe-2S]-[ferredoxin]. The protein operates within protein modification; protein lipoylation via endogenous pathway; protein N(6)-(lipoyl)lysine from octanoyl-[acyl-carrier-protein]: step 2/2. Functionally, catalyzes the radical-mediated insertion of two sulfur atoms into the C-6 and C-8 positions of the octanoyl moiety bound to the lipoyl domains of lipoate-dependent enzymes, thereby converting the octanoylated domains into lipoylated derivatives. The chain is Lipoyl synthase, mitochondrial from Drosophila sechellia (Fruit fly).